A 61-amino-acid polypeptide reads, in one-letter code: Probable tautomerase LMOf2365_2536 (61 aa).

The Proton acceptor; via imino nitrogen role is filled by Pro-2.

It belongs to the 4-oxalocrotonate tautomerase family.

The chain is Probable tautomerase LMOf2365_2536 from Listeria monocytogenes serotype 4b (strain F2365).